The chain runs to 119 residues: Large ribosomal subunit protein bL20 (119 aa).

It belongs to the bacterial ribosomal protein bL20 family.

Binds directly to 23S ribosomal RNA and is necessary for the in vitro assembly process of the 50S ribosomal subunit. It is not involved in the protein synthesizing functions of that subunit. The sequence is that of Large ribosomal subunit protein bL20 from Acinetobacter baylyi (strain ATCC 33305 / BD413 / ADP1).